The chain runs to 461 residues: Cysteine--tRNA ligase (461 aa).

Cysteine 28 contacts Zn(2+). The short motif at 30-40 (ITIYDLCHIGH) is the 'HIGH' region element. Zn(2+) contacts are provided by cysteine 209, histidine 234, and glutamate 238. The 'KMSKS' region signature appears at 266-270 (KMSKS). Lysine 269 contributes to the ATP binding site.

Belongs to the class-I aminoacyl-tRNA synthetase family. In terms of assembly, monomer. Zn(2+) is required as a cofactor.

It is found in the cytoplasm. It catalyses the reaction tRNA(Cys) + L-cysteine + ATP = L-cysteinyl-tRNA(Cys) + AMP + diphosphate. The protein is Cysteine--tRNA ligase of Yersinia pseudotuberculosis serotype IB (strain PB1/+).